Consider the following 408-residue polypeptide: Metacaspase-1B (408 aa).

The disordered stretch occupies residues 1–98; the sequence is MYHRHSAPPP…PPLEAQQFGN (98 aa). Composition is skewed to pro residues over residues 24–49 and 56–66; these read WPPPQPYEYPPYPPQGPPPAHTFPPP and SPYPTPPPHSP. Active-site residues include H199 and C255.

This sequence belongs to the peptidase C14B family.

Its function is as follows. Involved in cell death (apoptosis). Required for the apoptotic-like loss of membrane phospholipid asymmetry at stationary phase and facilitates growth under conditions of endoplasmic reticulum stress. The chain is Metacaspase-1B (casB) from Aspergillus fumigatus (strain CBS 144.89 / FGSC A1163 / CEA10) (Neosartorya fumigata).